The following is a 155-amino-acid chain: Probable tellurium resistance transcriptional regulator TerW (155 aa).

Its function is as follows. Involved in tellurite resistance. TerW binds specifically to the potential promoter region of the terZABCDE operon and probably regulates expression of the genes. The protein is Probable tellurium resistance transcriptional regulator TerW of Escherichia coli.